Here is a 292-residue protein sequence, read N- to C-terminus: MSKKQSSTPHDALFKLFLRQPDTARDFLAFHLPAPIHALCDMKTLKLESSSFIDDDLRESYSDVLWSVKTEQGPGYIYCLIEHQSTSNKLIAFRMMRYAIAAMQNHLDAGYKTLPMVVPLLFYHGIESPYPYSLCWLDCFADPKLARQLYASAFPLIDVTVMPDDEIMQHRRMALLELIQKHIRQRDLMGLVEQMACLLSSGYANDRQIKGLFNYILQTGDAVRFNDFIDGVAERSPKHKESLMTIAERLRQEGEQSKALHIAKIMLESGVPLADIMRFTGLSEEELAAASQ.

The protein belongs to the Rpn/YhgA-like nuclease family. The cofactor is Mg(2+).

Inhibited by EDTA, Zn(2+) and by Mg(2+) plus Mn(2+); stimulated by Ca(2+) in the presence of Mg(2+). A low activity DNA endonuclease yielding 3'-hydroxyl ends, equally active on ss or dsDNA, not active on dsRNA. Shows no sequence specificity. Upon expression enhances RecA-independent DNA recombination 49-fold, concomitantly reducing viability by 88% and probably inducing DNA damage as measured by induction of the SOS repair response in RecA cells. RecA-independent DNA recombination leads to replacement of recipient genes with large segments of donor DNA rather than DNA addition to the donor strain; increased expression of RpnA leads to smaller replacement segments, suggesting this protein may play a role in generating crossover events. This Escherichia coli (strain K12) protein is Recombination-promoting nuclease RpnA.